The primary structure comprises 372 residues: Delta-type opioid receptor (372 aa).

Residues 1–47 (MEPAPSAGAELQPPLFANASDAYPSACPSAGANASGPPGARSASSLA) are Extracellular-facing. N-linked (GlcNAc...) asparagine glycans are attached at residues Asn18 and Asn33. A helical transmembrane segment spans residues 48–75 (LAIAITALYSAVCAVGLLGNVLVMFGIV). The Cytoplasmic portion of the chain corresponds to 76-85 (RYTKMKTATN). Residues 86–110 (IYIFNLALADALATSTLPFQSAKYL) form a helical membrane-spanning segment. The Extracellular segment spans residues 111–122 (METWPFGELLCK). A disulfide bridge connects residues Cys121 and Cys198. The helical transmembrane segment at 123-144 (AVLSIDYYNMFTSIFTLTMMSV) threads the bilayer. Residues 145-163 (DRYIAVCHPVKALDFRTPA) are Cytoplasmic-facing. Residues 164-186 (KAKLINICIWVLASGVGVPIMVM) form a helical membrane-spanning segment. Over 187-206 (AVTRPRDGAVVCMLQFPSPS) the chain is Extracellular. Residues 207–238 (WYWDTVTKICVFLFAFVVPILIITVCYGLMLL) traverse the membrane as a helical segment. Residues 239-261 (RLRSVRLLSGSKEKDRSLRRITR) are Cytoplasmic-facing. The chain crosses the membrane as a helical span at residues 262 to 284 (MVLVVVGAFVVCWAPIHIFVIVW). The Extracellular segment spans residues 285 to 299 (TLVDIDRRDPLVVAA). The chain crosses the membrane as a helical span at residues 300 to 321 (LHLCIALGYANSSLNPVLYAFL). The Cytoplasmic segment spans residues 322–372 (DENFKRCFRQLCRKPCGRPDPSSFSRAREATARERVTACTPSDGPGGGAAA). Residue Cys333 is the site of S-palmitoyl cysteine attachment. The interval 340 to 372 (PDPSSFSRAREATARERVTACTPSDGPGGGAAA) is disordered. The span at 347–357 (RAREATARERV) shows a compositional bias: basic and acidic residues.

This sequence belongs to the G-protein coupled receptor 1 family. In terms of assembly, may form homooligomers. Forms a heterodimer with OPRM1. Interacts with GPRASP1. Interacts with RTP4; the interaction promotes cell surface localization of the OPRD1-OPRM1 heterodimer. In terms of processing, N-glycosylated. Ubiquitinated. A basal ubiquitination seems not to be related to degradation. Ubiquitination is increased upon formation of OPRM1:OPRD1 oligomers leading to proteasomal degradation; the ubiquitination is diminished by RTP4. As to expression, detected in oocytes (at protein level). Detected in brain cortex, hypothalamus, hippocampus and olfactory bulb. Detected in oocytes.

It is found in the cell membrane. Functionally, G-protein coupled receptor that functions as a receptor for endogenous enkephalins and for a subset of other opioids. Ligand binding causes a conformation change that triggers signaling via guanine nucleotide-binding proteins (G proteins) and modulates the activity of down-stream effectors, such as adenylate cyclase. Signaling leads to the inhibition of adenylate cyclase activity. Inhibits neurotransmitter release by reducing calcium ion currents and increasing potassium ion conductance. Plays a role in the perception of pain and in opiate-mediated analgesia. Plays a role in developing analgesic tolerance to morphine. This chain is Delta-type opioid receptor (OPRD1), found in Homo sapiens (Human).